We begin with the raw amino-acid sequence, 314 residues long: Hydroxyethylthiazole kinase (314 aa).

Methionine 70 contributes to the substrate binding site. 2 residues coordinate ATP: arginine 145 and serine 217. Glycine 244 serves as a coordination point for substrate.

It belongs to the Thz kinase family. Mg(2+) is required as a cofactor.

It carries out the reaction 5-(2-hydroxyethyl)-4-methylthiazole + ATP = 4-methyl-5-(2-phosphooxyethyl)-thiazole + ADP + H(+). The protein operates within cofactor biosynthesis; thiamine diphosphate biosynthesis; 4-methyl-5-(2-phosphoethyl)-thiazole from 5-(2-hydroxyethyl)-4-methylthiazole: step 1/1. In terms of biological role, catalyzes the phosphorylation of the hydroxyl group of 4-methyl-5-beta-hydroxyethylthiazole (THZ). In Bifidobacterium longum (strain NCC 2705), this protein is Hydroxyethylthiazole kinase.